Reading from the N-terminus, the 235-residue chain is Orotidine 5'-phosphate decarboxylase (235 aa).

Substrate contacts are provided by residues aspartate 12, lysine 34, 61 to 70 (DMKLLDIDNT), threonine 116, arginine 177, glutamine 186, and arginine 207. Residue lysine 63 is the Proton donor of the active site.

This sequence belongs to the OMP decarboxylase family. Type 1 subfamily. In terms of assembly, homodimer.

The catalysed reaction is orotidine 5'-phosphate + H(+) = UMP + CO2. It functions in the pathway pyrimidine metabolism; UMP biosynthesis via de novo pathway; UMP from orotate: step 2/2. In terms of biological role, catalyzes the decarboxylation of orotidine 5'-monophosphate (OMP) to uridine 5'-monophosphate (UMP). The protein is Orotidine 5'-phosphate decarboxylase of Rhizobium leguminosarum bv. trifolii (strain WSM2304).